A 219-amino-acid chain; its full sequence is Uracil-DNA glycosylase (219 aa).

Asp61 acts as the Proton acceptor in catalysis.

This sequence belongs to the uracil-DNA glycosylase (UDG) superfamily. UNG family.

Its subcellular location is the cytoplasm. The enzyme catalyses Hydrolyzes single-stranded DNA or mismatched double-stranded DNA and polynucleotides, releasing free uracil.. Its function is as follows. Excises uracil residues from the DNA which can arise as a result of misincorporation of dUMP residues by DNA polymerase or due to deamination of cytosine. The chain is Uracil-DNA glycosylase from Neisseria meningitidis serogroup B (strain ATCC BAA-335 / MC58).